The primary structure comprises 303 residues: Putative 1-phosphofructokinase (303 aa).

Residues 217 to 222 and 249 to 250 each bind ATP; these read SDGDKG and GD. The active-site Proton acceptor is the Asp250.

Belongs to the carbohydrate kinase PfkB family.

It carries out the reaction beta-D-fructose 1-phosphate + ATP = beta-D-fructose 1,6-bisphosphate + ADP + H(+). Functionally, catalyzes the ATP-dependent phosphorylation of fructose-l-phosphate to fructose-l,6-bisphosphate. This is Putative 1-phosphofructokinase (fruK) from Mycoplasma genitalium (strain ATCC 33530 / DSM 19775 / NCTC 10195 / G37) (Mycoplasmoides genitalium).